The primary structure comprises 80 residues: CLAVATA3/ESR (CLE)-related protein 14 (80 aa).

An N-terminal signal peptide occupies residues 1 to 26; sequence MKVWSQRLSFLIVMIFILAGLHSSSA. Residues Pro71 and Pro74 each carry the hydroxyproline modification. O-linked (Ara...) hydroxyproline glycosylation occurs at Pro74.

Belongs to the CLV3/ESR signal peptide family. Interacts with the extracellular leucine-rich repeat region of CLV2 and PEPR2. In terms of processing, the O-glycosylation (arabinosylation) of the hydroxyproline Pro-74 enhances binding affinity of the CLE14p peptide for its receptor. As to expression, mostly expressed in roots, and, to a lower extent, in seedlings and leaves. Expressed in the primary root tip under Pi deficiency.

It is found in the secreted. The protein localises to the extracellular space. Extracellular signal peptide that regulates cell fate. Represses root apical meristem maintenance. Acts as an elicitor of the root meristem differentiation through the CLV2/CRN complex signaling pathway. Inhibits irreversibly root growth by reducing cell division rates in the root apical meristem. Regulates the transition of protophloem cells from proliferation to differentiation, thus impinging on postembryonic growth capacity of the root meristem; this signaling pathway requires CRN and CLV2. This Arabidopsis thaliana (Mouse-ear cress) protein is CLAVATA3/ESR (CLE)-related protein 14.